The following is a 691-amino-acid chain: Glycine--tRNA ligase beta subunit (691 aa).

Belongs to the class-II aminoacyl-tRNA synthetase family. In terms of assembly, tetramer of two alpha and two beta subunits.

The protein localises to the cytoplasm. It catalyses the reaction tRNA(Gly) + glycine + ATP = glycyl-tRNA(Gly) + AMP + diphosphate. The protein is Glycine--tRNA ligase beta subunit of Buchnera aphidicola subsp. Schizaphis graminum (strain Sg).